Reading from the N-terminus, the 152-residue chain is 3-hydroxyacyl-[acyl-carrier-protein] dehydratase FabZ (152 aa).

Residue histidine 57 is part of the active site.

The protein belongs to the thioester dehydratase family. FabZ subfamily.

The protein localises to the cytoplasm. The enzyme catalyses a (3R)-hydroxyacyl-[ACP] = a (2E)-enoyl-[ACP] + H2O. Functionally, involved in unsaturated fatty acids biosynthesis. Catalyzes the dehydration of short chain beta-hydroxyacyl-ACPs and long chain saturated and unsaturated beta-hydroxyacyl-ACPs. The protein is 3-hydroxyacyl-[acyl-carrier-protein] dehydratase FabZ of Bradyrhizobium sp. (strain BTAi1 / ATCC BAA-1182).